We begin with the raw amino-acid sequence, 122 residues long: Prefoldin subunit 1 (122 aa).

Position 2 is an N-acetylalanine (Ala2).

Belongs to the prefoldin subunit beta family. In terms of assembly, heterohexamer of two PFD-alpha type and four PFD-beta type subunits.

In terms of biological role, binds specifically to cytosolic chaperonin (c-CPN) and transfers target proteins to it. Binds to nascent polypeptide chain and promotes folding in an environment in which there are many competing pathways for nonnative proteins. The protein is Prefoldin subunit 1 (PFDN1) of Pongo abelii (Sumatran orangutan).